The following is a 107-amino-acid chain: Thiosulfate sulfurtransferase GlpE (107 aa).

One can recognise a Rhodanese domain in the interval 16-104; that stretch reads KKRDIVIADV…WKAHHPTSDA (89 aa). Cys-64 functions as the Cysteine persulfide intermediate in the catalytic mechanism.

The protein belongs to the GlpE family.

It is found in the cytoplasm. It carries out the reaction thiosulfate + hydrogen cyanide = thiocyanate + sulfite + 2 H(+). The catalysed reaction is thiosulfate + [thioredoxin]-dithiol = [thioredoxin]-disulfide + hydrogen sulfide + sulfite + 2 H(+). Functionally, transferase that catalyzes the transfer of sulfur from thiosulfate to thiophilic acceptors such as cyanide or dithiols. May function in a CysM-independent thiosulfate assimilation pathway by catalyzing the conversion of thiosulfate to sulfite, which can then be used for L-cysteine biosynthesis. The sequence is that of Thiosulfate sulfurtransferase GlpE from Coxiella burnetii (strain CbuK_Q154) (Coxiella burnetii (strain Q154)).